The following is a 510-amino-acid chain: NAD(P)H-quinone oxidoreductase subunit 2, chloroplastic (510 aa).

Transmembrane regions (helical) follow at residues 24–44 (LLLF…GLIL), 59–79 (WFYF…LFRW), 99–119 (IFQF…VEYI), 124–144 (MAIT…MFLC), 149–169 (FITI…LSGY), 183–203 (YLLM…WLYG), 229–249 (ISIA…PAPF), 295–315 (WHLL…LIAI), 323–343 (MLAY…IVGD), 347–367 (GYAS…GTFA), 395–415 (ALSL…AGFF), and 418–438 (LHLF…IGLL).

Belongs to the complex I subunit 2 family. NDH is composed of at least 16 different subunits, 5 of which are encoded in the nucleus.

It is found in the plastid. The protein localises to the chloroplast thylakoid membrane. The enzyme catalyses a plastoquinone + NADH + (n+1) H(+)(in) = a plastoquinol + NAD(+) + n H(+)(out). It carries out the reaction a plastoquinone + NADPH + (n+1) H(+)(in) = a plastoquinol + NADP(+) + n H(+)(out). In terms of biological role, NDH shuttles electrons from NAD(P)H:plastoquinone, via FMN and iron-sulfur (Fe-S) centers, to quinones in the photosynthetic chain and possibly in a chloroplast respiratory chain. The immediate electron acceptor for the enzyme in this species is believed to be plastoquinone. Couples the redox reaction to proton translocation, and thus conserves the redox energy in a proton gradient. The polypeptide is NAD(P)H-quinone oxidoreductase subunit 2, chloroplastic (Phormium tenax (New Zealand flax)).